We begin with the raw amino-acid sequence, 473 residues long: Ornithine decarboxylase (473 aa).

An N6-(pyridoxal phosphate)lysine modification is found at Lys-106. Residues Ser-240, Gly-277, and 313-316 (EPGR) each bind pyridoxal 5'-phosphate. 367–368 (FD) lines the substrate pocket. The active-site Proton donor; shared with dimeric partner is Cys-417. Residue Asp-418 coordinates substrate. Tyr-447 contacts pyridoxal 5'-phosphate.

It belongs to the Orn/Lys/Arg decarboxylase class-II family. As to quaternary structure, homodimer. Only the dimer is catalytically active, as the active sites are constructed of residues from both monomers. Requires pyridoxal 5'-phosphate as cofactor.

It is found in the cytoplasm. It catalyses the reaction L-ornithine + H(+) = putrescine + CO2. The protein operates within amine and polyamine biosynthesis; putrescine biosynthesis via L-ornithine pathway; putrescine from L-ornithine: step 1/1. Its activity is regulated as follows. Inhibited by antizyme (AZ) OAZ1 in response to polyamine levels. AZ inhibits the assembly of the functional homodimer by binding to ODC monomers and targeting them for ubiquitin-independent proteolytic destruction by the 26S proteasome. In terms of biological role, catalyzes the first and rate-limiting step of polyamine biosynthesis that converts ornithine into putrescine, which is the precursor for the polyamines, spermidine and spermine. Polyamines are essential for cell proliferation and are implicated in cellular processes, ranging from DNA replication to apoptosis. The sequence is that of Ornithine decarboxylase (SPE1) from Candida albicans (strain SC5314 / ATCC MYA-2876) (Yeast).